Consider the following 587-residue polypeptide: tRNA (guanine(37)-N(1))-methyltransferase 2 (587 aa).

S-adenosyl-L-methionine contacts are provided by residues arginine 360 and aspartate 430–alanine 431. Positions alanine 446–methionine 469 are disordered. Residues serine 450–asparagine 461 show a composition bias toward basic and acidic residues. Residue asparagine 478 participates in S-adenosyl-L-methionine binding.

This sequence belongs to the class I-like SAM-binding methyltransferase superfamily. TRM5/TYW2 family. As to quaternary structure, monomer.

The protein localises to the mitochondrion matrix. Its subcellular location is the nucleus. The protein resides in the cytoplasm. The enzyme catalyses guanosine(37) in tRNA + S-adenosyl-L-methionine = N(1)-methylguanosine(37) in tRNA + S-adenosyl-L-homocysteine + H(+). Its function is as follows. Specifically methylates the N1 position of guanosine-37 in various cytoplasmic and mitochondrial tRNAs. Methylation is not dependent on the nature of the nucleoside 5' of the target nucleoside. This is the first step in the biosynthesis of wybutosine (yW), a modified base adjacent to the anticodon of tRNAs and required for accurate decoding. The chain is tRNA (guanine(37)-N(1))-methyltransferase 2 from Phaeodactylum tricornutum (strain CCAP 1055/1).